Here is a 542-residue protein sequence, read N- to C-terminus: Chaperonin GroEL (542 aa).

Residues T29–P32, D86–T90, G413, and D493 each bind ATP.

It belongs to the chaperonin (HSP60) family. Forms a cylinder of 14 subunits composed of two heptameric rings stacked back-to-back. Interacts with the co-chaperonin GroES.

The protein localises to the cytoplasm. It carries out the reaction ATP + H2O + a folded polypeptide = ADP + phosphate + an unfolded polypeptide.. Together with its co-chaperonin GroES, plays an essential role in assisting protein folding. The GroEL-GroES system forms a nano-cage that allows encapsulation of the non-native substrate proteins and provides a physical environment optimized to promote and accelerate protein folding. This is Chaperonin GroEL from Elusimicrobium minutum (strain Pei191).